A 195-amino-acid polypeptide reads, in one-letter code: U8 snoRNA-decapping enzyme (195 aa).

A Nudix hydrolase domain is found at 18–173 (GWRHACHALL…IGSAREQLLE (156 aa)). The substrate site is built by histidine 24, arginine 50, and phenylalanine 57. Positions 59, 76, 80, and 99 each coordinate Mn(2+). The Nudix box motif lies at 61-82 (FVDTQDRSLEDGLNRELREELG). Substrate is bound at residue glutamine 170. Glutamate 173 is a binding site for Mn(2+).

Belongs to the Nudix hydrolase family. NUDT16 subfamily. As to quaternary structure, homodimer. Mg(2+) is required as a cofactor. Mn(2+) serves as cofactor. The cofactor is Co(2+). As to expression, expressed strongly in lung, kidney, adrenal gland, testis, heart and brain.

Its subcellular location is the nucleus. It is found in the nucleoplasm. The protein localises to the nucleolus. It localises to the cytoplasm. The catalysed reaction is a 5'-end (N(7)-methyl 5'-triphosphoguanosine)-ribonucleoside in mRNA + H2O = N(7)-methyl-GDP + a 5'-end phospho-ribonucleoside in mRNA + 2 H(+). The enzyme catalyses IDP + H2O = IMP + phosphate + H(+). It catalyses the reaction dIDP + H2O = dIMP + phosphate + H(+). It carries out the reaction a 5'-end NAD(+)-phospho-ribonucleoside in mRNA + H2O = a 5'-end phospho-adenosine-phospho-ribonucleoside in mRNA + beta-nicotinamide D-ribonucleotide + 2 H(+). The catalysed reaction is a 5'-end FAD-phospho-ribonucleoside in mRNA + H2O = a 5'-end phospho-adenosine-phospho-ribonucleoside in mRNA + FMN + 2 H(+). The enzyme catalyses a 5'-end CoA-ribonucleoside in mRNA + H2O = a 5'-end phospho-adenosine-phospho-ribonucleoside in mRNA + (R)-4'-phosphopantetheine + 2 H(+). The phosphatase activity is inhibited by the product IMP. Functionally, RNA-binding and decapping enzyme that catalyzes the cleavage of the cap structure of snoRNAs and mRNAs in a metal-dependent manner. Part of the U8 snoRNP complex that is required for the accumulation of mature 5.8S and 28S rRNA. Has diphosphatase activity and removes m7G and/or m227G caps from U8 snoRNA and leaves a 5'monophosphate on the RNA. Also catalyzes the cleavage of the cap structure on mRNAs. Does not hydrolyze cap analog structures like 7-methylguanosine nucleoside triphosphate (m7GpppG). Also hydrolysis m7G- and m227G U3-capped RNAs but with less efficiencies. Has broad substrate specificity with manganese or cobalt as cofactor and can act on various RNA species. Binds to the U8 snoRNA; metal is not required for RNA-binding. May play a role in the regulation of snoRNAs and mRNAs degradation. Also acts as a phosphatase; hydrolyzes the non-canonical purine nucleotides inosine diphosphate (IDP) and deoxyinosine diphosphate (dITP) as well as guanosine diphosphate (GDP), deoxyguanosine diphosphate (dGDP), xanthine diphosphate (XDP), inosine triphosphate (ITP) and deoxyinosine triphosphate (ITP) to their respective monophosphate derivatives and does not distinguish between the deoxy- and ribose forms. The order of activity with different substrates is IDP &gt; dIDP &gt;&gt; GDP = dGDP &gt; XDP = ITP = dITP. Binds strongly to GTP, ITP and XTP. Participates in the hydrolysis of dIDP/IDP and probably excludes non-canonical purines from RNA and DNA precursor pools, thus preventing their incorporation into RNA and DNA and avoiding chromosomal lesions. Exhibits decapping activity towards NAD-capped RNAs and FAD-capped RNAs. Exhibits decapping activity towards dpCoA-capped RNAs in vitro. The sequence is that of U8 snoRNA-decapping enzyme (NUDT16) from Homo sapiens (Human).